The primary structure comprises 192 residues: Ion-translocating oxidoreductase complex subunit A (192 aa).

6 helical membrane-spanning segments follow: residues 5 to 25, 39 to 59, 72 to 92, 102 to 122, 134 to 154, and 171 to 191; these read LLLL…FLGL, IGMS…SFLV, LRTM…EMLV, ALGI…VALL, AIYG…FSAM, and AIAM…TGLV.

It belongs to the NqrDE/RnfAE family. As to quaternary structure, the complex is composed of six subunits: RnfA, RnfB, RnfC, RnfD, RnfE and RnfG.

The protein resides in the cell inner membrane. Its function is as follows. Part of a membrane-bound complex that couples electron transfer with translocation of ions across the membrane. This Shewanella amazonensis (strain ATCC BAA-1098 / SB2B) protein is Ion-translocating oxidoreductase complex subunit A.